Consider the following 233-residue polypeptide: Opacity protein opA67 (233 aa).

Ala-1 is a signal peptide.

It belongs to the opacity porin family.

It is found in the cell outer membrane. Implicated in a number of adherence functions. OPA proteins are implicated in pathogenesis and are subject to phase variation. This chain is Opacity protein opA67, found in Neisseria gonorrhoeae.